The following is a 214-amino-acid chain: rRNA N(6)-adenosine-methyltransferase metl-5 (214 aa).

Residues Gln-25, Thr-28, Gly-55, Cys-58, Asp-78, and 106-107 contribute to the S-adenosyl-L-methionine site; that span reads DI.

The protein belongs to the methyltransferase superfamily. PrmA family. As to quaternary structure, heterodimer; heterodimerizes with TRMT112/C04H5.1.

The catalysed reaction is adenosine in rRNA + S-adenosyl-L-methionine = N(6)-methyladenosine in rRNA + S-adenosyl-L-homocysteine + H(+). Functionally, catalytic subunit of a heterodimer with TRMT112/C04H5.1, which specifically methylates the 6th position of adenine in position 1717 of 18S rRNA. The polypeptide is rRNA N(6)-adenosine-methyltransferase metl-5 (Caenorhabditis elegans).